A 484-amino-acid chain; its full sequence is UDP-N-acetylmuramate--L-alanine ligase (484 aa).

127–133 contributes to the ATP binding site; that stretch reads GTHGKTT.

Belongs to the MurCDEF family.

The protein localises to the cytoplasm. It catalyses the reaction UDP-N-acetyl-alpha-D-muramate + L-alanine + ATP = UDP-N-acetyl-alpha-D-muramoyl-L-alanine + ADP + phosphate + H(+). It participates in cell wall biogenesis; peptidoglycan biosynthesis. Its function is as follows. Cell wall formation. The sequence is that of UDP-N-acetylmuramate--L-alanine ligase from Shewanella amazonensis (strain ATCC BAA-1098 / SB2B).